The sequence spans 202 residues: LexA repressor (202 aa).

A DNA-binding region (H-T-H motif) is located at residues 28-48 (IAEIARAIGVSSPHGVREQLR). Catalysis depends on for autocatalytic cleavage activity residues S120 and K157.

This sequence belongs to the peptidase S24 family. Homodimer.

The catalysed reaction is Hydrolysis of Ala-|-Gly bond in repressor LexA.. Functionally, represses a number of genes involved in the response to DNA damage (SOS response), including recA and lexA. In the presence of single-stranded DNA, RecA interacts with LexA causing an autocatalytic cleavage which disrupts the DNA-binding part of LexA, leading to derepression of the SOS regulon and eventually DNA repair. The chain is LexA repressor from Methylococcus capsulatus (strain ATCC 33009 / NCIMB 11132 / Bath).